Here is an 88-residue protein sequence, read N- to C-terminus: Small ribosomal subunit protein uS15 (88 aa).

The protein belongs to the universal ribosomal protein uS15 family. As to quaternary structure, part of the 30S ribosomal subunit. Forms a bridge to the 50S subunit in the 70S ribosome, contacting the 23S rRNA.

Its function is as follows. One of the primary rRNA binding proteins, it binds directly to 16S rRNA where it helps nucleate assembly of the platform of the 30S subunit by binding and bridging several RNA helices of the 16S rRNA. In terms of biological role, forms an intersubunit bridge (bridge B4) with the 23S rRNA of the 50S subunit in the ribosome. The polypeptide is Small ribosomal subunit protein uS15 (Acidovorax sp. (strain JS42)).